The sequence spans 214 residues: Adenylate kinase (214 aa).

ATP is bound at residue 15–20 (GAGKGT). Residues 35 to 64 (ASGDLFREAIKNQSVIGRKIAAIISQGGYV) form an NMP region. Residues serine 36, arginine 41, 62–64 (GYV), 90–93 (GYPR), and glutamine 97 each bind AMP. The LID stretch occupies residues 127 to 164 (NRVICNNCNSVYNLLFQKPLVENSCDQCSAKLVKRSDD). Arginine 128 lines the ATP pocket. Residues cysteine 131 and cysteine 134 each contribute to the Zn(2+) site. 137–138 (VY) serves as a coordination point for ATP. The Zn(2+) site is built by cysteine 151 and cysteine 154. Residues arginine 161 and arginine 172 each contribute to the AMP site. Leucine 200 serves as a coordination point for ATP.

It belongs to the adenylate kinase family. Monomer.

Its subcellular location is the cytoplasm. It catalyses the reaction AMP + ATP = 2 ADP. The protein operates within purine metabolism; AMP biosynthesis via salvage pathway; AMP from ADP: step 1/1. Its function is as follows. Catalyzes the reversible transfer of the terminal phosphate group between ATP and AMP. Plays an important role in cellular energy homeostasis and in adenine nucleotide metabolism. The protein is Adenylate kinase of Mycoplasma genitalium (strain ATCC 33530 / DSM 19775 / NCTC 10195 / G37) (Mycoplasmoides genitalium).